We begin with the raw amino-acid sequence, 309 residues long: MASDGVVTVYGDGAITDTKVSSYAVKVGLAQMLRGGVIMDVVNAEQARIAEEAGATAVMALERVPADIRAQGGVARMSDPGLIKEIKSAVTIPVMAKARIGHFVEAQILEAIGIDYIDESEVLTPADDXHHINKHNFRIPFVCGCRNLGEALRRIAEGAAMIRTKGEAGTGNVIEAVRHVRSVLGDIRKLQSLDDDEVFAFAKQIAAPYELVRQTKQLGRLPVVNFAAGGVATPADAALMMQLGCDGVFVGSGVFKSGDPARRARAIVQAVTHYNDPHILAEVSCSLGEAMVGINLKDEKVERYAERSE.

Asp-40 lines the D-ribose 5-phosphate pocket. Lys-97 functions as the Schiff-base intermediate with D-ribose 5-phosphate in the catalytic mechanism. Residue Gly-169 coordinates D-ribose 5-phosphate. Residue Arg-181 participates in D-glyceraldehyde 3-phosphate binding. D-ribose 5-phosphate-binding positions include Gly-230 and 251-252 (GS).

Belongs to the PdxS/SNZ family.

The catalysed reaction is aldehydo-D-ribose 5-phosphate + D-glyceraldehyde 3-phosphate + L-glutamine = pyridoxal 5'-phosphate + L-glutamate + phosphate + 3 H2O + H(+). The protein operates within cofactor biosynthesis; pyridoxal 5'-phosphate biosynthesis. Functionally, catalyzes the formation of pyridoxal 5'-phosphate from ribose 5-phosphate (RBP), glyceraldehyde 3-phosphate (G3P) and ammonia. The ammonia is provided by PDX2. Can also use ribulose 5-phosphate and dihydroxyacetone phosphate as substrates, resulting from enzyme-catalyzed isomerization of RBP and G3P, respectively. Also plays an indirect role in resistance to singlet oxygen-generating photosensitizers. The sequence is that of Probable pyridoxal 5'-phosphate synthase subunit PDX1 (PDX1) from Ginkgo biloba (Ginkgo).